The chain runs to 414 residues: DNA polymerase IV (414 aa).

In terms of domain architecture, UmuC spans 8–189 (IFHIDMNSFY…LPIEEMHGIG (182 aa)). Residues Asp-12 and Asp-108 each coordinate Mg(2+). The active site involves Glu-109. The tract at residues 394–414 (EESKTRGTSFNRDFFQDEKKR) is disordered.

It belongs to the DNA polymerase type-Y family. In terms of assembly, monomer. Mg(2+) serves as cofactor.

It is found in the cytoplasm. It carries out the reaction DNA(n) + a 2'-deoxyribonucleoside 5'-triphosphate = DNA(n+1) + diphosphate. In terms of biological role, poorly processive, error-prone DNA polymerase involved in untargeted mutagenesis. Copies undamaged DNA at stalled replication forks, which arise in vivo from mismatched or misaligned primer ends. These misaligned primers can be extended by PolIV. Exhibits no 3'-5' exonuclease (proofreading) activity. May be involved in translesional synthesis, in conjunction with the beta clamp from PolIII. In Bacillus velezensis (strain DSM 23117 / BGSC 10A6 / LMG 26770 / FZB42) (Bacillus amyloliquefaciens subsp. plantarum), this protein is DNA polymerase IV.